We begin with the raw amino-acid sequence, 85 residues long: Large ribosomal subunit protein bL27 (85 aa).

The interval methionine 1–leucine 21 is disordered. Over residues serine 9–glutamine 19 the composition is skewed to polar residues.

It belongs to the bacterial ribosomal protein bL27 family.

In Pectobacterium carotovorum subsp. carotovorum (strain PC1), this protein is Large ribosomal subunit protein bL27.